We begin with the raw amino-acid sequence, 213 residues long: uncharacterized protein (213 aa).

The chain crosses the membrane as a helical span at residues 22–42 (WFGLSMVSIAVIFGPLTGAHV). The short motif at 43–45 (NPA) is the NPA 1 element. The next 3 membrane-spanning stretches (helical) occupy residues 63–83 (VYII…WLLF), 112–132 (NLLS…TLNH), and 138–158 (GVAM…FGGL). The NPA 2 signature appears at 164–166 (NPA). A helical transmembrane segment spans residues 188-208 (FDYAWVPVLRPVIGAILAAWL).

It belongs to the MIP/aquaporin (TC 1.A.8) family.

It localises to the cell membrane. This is an uncharacterized protein from Haemophilus influenzae (strain ATCC 51907 / DSM 11121 / KW20 / Rd).